The primary structure comprises 290 residues: 4-hydroxy-tetrahydrodipicolinate synthase (290 aa).

Threonine 44 serves as a coordination point for pyruvate. Tyrosine 132 (proton donor/acceptor) is an active-site residue. Catalysis depends on lysine 160, which acts as the Schiff-base intermediate with substrate. Isoleucine 202 is a binding site for pyruvate.

The protein belongs to the DapA family. In terms of assembly, homotetramer; dimer of dimers.

It is found in the cytoplasm. The enzyme catalyses L-aspartate 4-semialdehyde + pyruvate = (2S,4S)-4-hydroxy-2,3,4,5-tetrahydrodipicolinate + H2O + H(+). It functions in the pathway amino-acid biosynthesis; L-lysine biosynthesis via DAP pathway; (S)-tetrahydrodipicolinate from L-aspartate: step 3/4. Functionally, catalyzes the condensation of (S)-aspartate-beta-semialdehyde [(S)-ASA] and pyruvate to 4-hydroxy-tetrahydrodipicolinate (HTPA). The sequence is that of 4-hydroxy-tetrahydrodipicolinate synthase from Trichlorobacter lovleyi (strain ATCC BAA-1151 / DSM 17278 / SZ) (Geobacter lovleyi).